Reading from the N-terminus, the 552-residue chain is N-acetylglucosamine-6-sulfatase (552 aa).

A signal peptide spans 1–36; it reads MRLLPLAPGRLRRGSPRHLPSCSPALLLLVLGGCLG. 3 residues coordinate Ca(2+): aspartate 55, aspartate 56, and cysteine 91. Cysteine 91 (nucleophile) is an active-site residue. Cysteine 91 bears the 3-oxoalanine (Cys) mark. 7 N-linked (GlcNAc...) asparagine glycosylation sites follow: asparagine 111, asparagine 117, asparagine 183, asparagine 198, asparagine 210, asparagine 279, and asparagine 317. Ca(2+)-binding residues include aspartate 326 and asparagine 327. N-linked (GlcNAc...) asparagine glycans are attached at residues asparagine 362, asparagine 387, asparagine 405, asparagine 422, asparagine 449, and asparagine 480. A Phosphoserine modification is found at serine 541.

It belongs to the sulfatase family. Ca(2+) is required as a cofactor. The form A (78 kDa) is processed by internal peptidase cleavage to a 32 kDa N-terminal species (form B) and a 48 kDa C-terminal species. Post-translationally, the conversion to 3-oxoalanine (also known as C-formylglycine, FGly), of a serine or cysteine residue in prokaryotes and of a cysteine residue in eukaryotes, is critical for catalytic activity.

The protein localises to the lysosome. It carries out the reaction Hydrolysis of the 6-sulfate groups of the N-acetyl-D-glucosamine 6-sulfate units of heparan sulfate and keratan sulfate.. Functionally, hydrolyzes 6-sulfate groups in N-acetyl-d-glucosaminide units of heparin sulfate and keratan sulfate. In Homo sapiens (Human), this protein is N-acetylglucosamine-6-sulfatase (GNS).